The chain runs to 421 residues: tRNA (guanine(37)-N(1))-methyltransferase (421 aa).

Residues Arg-198, 242–243, 270–271, and Asn-293 each bind S-adenosyl-L-methionine; these read DL and DA.

The protein belongs to the class I-like SAM-binding methyltransferase superfamily. TRM5/TYW2 family. Monomer.

Its subcellular location is the mitochondrion matrix. The protein resides in the nucleus. It localises to the cytoplasm. The enzyme catalyses guanosine(37) in tRNA + S-adenosyl-L-methionine = N(1)-methylguanosine(37) in tRNA + S-adenosyl-L-homocysteine + H(+). Specifically methylates the N1 position of guanosine-37 in various cytoplasmic and mitochondrial tRNAs. Methylation is not dependent on the nature of the nucleoside 5' of the target nucleoside. This is the first step in the biosynthesis of wybutosine (yW), a modified base adjacent to the anticodon of tRNAs and required for accurate decoding. This Paramecium tetraurelia protein is tRNA (guanine(37)-N(1))-methyltransferase.